Consider the following 429-residue polypeptide: Argininosuccinate lyase (429 aa).

It belongs to the lyase 1 family. Argininosuccinate lyase subfamily.

It is found in the cytoplasm. It catalyses the reaction 2-(N(omega)-L-arginino)succinate = fumarate + L-arginine. The protein operates within amino-acid biosynthesis; L-arginine biosynthesis; L-arginine from L-ornithine and carbamoyl phosphate: step 3/3. In Pyrobaculum arsenaticum (strain DSM 13514 / JCM 11321 / PZ6), this protein is Argininosuccinate lyase.